A 655-amino-acid polypeptide reads, in one-letter code: MDIFSIANQHIRFAVKLATAIVLALFVGFHFQLETPRWAVLTAAIVAAGPAFAAGGEPYSGAIRYRGFLRIIGTFIGCIAGLVIIIAMIRAPLLMILVCCIWAGFCTWISSLVRIENSYAWGLAGYTALIIVITIQPEPLLTPQFAVERCSEIVIGIVCAIMADLLFSPRSIKQEVDRELESLLVAQYQLMQLCIKHGDGEVVDKAWGDLVRRTTALQGMRSNLNMESSRWARANRRLKAINTLSLTLITQSCETYLIQNTRPELITDTFREFFDTPVETAQDVHKQLKRLRRVIAWTGERETPVTIYSWVAAATRYQLLKRGVISNTKINATEEEILQGEPEVKVESAERHHAMVNFWRTTLSCILGTLFWLWTGWTSGSGAMVMIAVVTSLAMRLPNPRMVAIDFIYGTLAALPLGLLYFLVIIPNTQQSMLLLCISLAVLGFFLGIEVQKRRLGSMGALASTINIIVLDNPMTFHFSQFLDSALGQIVGCVLAFTVILLVRDKSRDRTGRVLLNQFVSAAVSAMTTNVARRKENHLPALYQQLFLLMNKFPGDLPKFRLALTMIIAHQRLRDAPIPVNEDLSAFHRQMRRTADHVISARSDDKRRRYFGQLLEELEIYQEKLCIWQAPPQVTEPVHRLAGMLHKYQHALTDS.

The Periplasmic portion of the chain corresponds to 1–12 (MDIFSIANQHIR). A helical transmembrane segment spans residues 13–33 (FAVKLATAIVLALFVGFHFQL). At 34 to 37 (ETPR) the chain is on the cytoplasmic side. The chain crosses the membrane as a helical span at residues 38 to 58 (WAVLTAAIVAAGPAFAAGGEP). Residues 59-68 (YSGAIRYRGF) are Periplasmic-facing. A helical transmembrane segment spans residues 69-89 (LRIIGTFIGCIAGLVIIIAMI). The Cytoplasmic portion of the chain corresponds to 90-92 (RAP). The helical transmembrane segment at 93–113 (LLMILVCCIWAGFCTWISSLV) threads the bilayer. Over 114–120 (RIENSYA) the chain is Periplasmic. The chain crosses the membrane as a helical span at residues 121 to 141 (WGLAGYTALIIVITIQPEPLL). Residues 142-151 (TPQFAVERCS) lie on the Cytoplasmic side of the membrane. The helical transmembrane segment at 152-172 (EIVIGIVCAIMADLLFSPRSI) threads the bilayer. Residues 173 to 369 (KQEVDRELES…RTTLSCILGT (197 aa)) lie on the Periplasmic side of the membrane. Residues 370–390 (LFWLWTGWTSGSGAMVMIAVV) traverse the membrane as a helical segment. Residues 391 to 406 (TSLAMRLPNPRMVAID) are Cytoplasmic-facing. Residues 407–427 (FIYGTLAALPLGLLYFLVIIP) form a helical membrane-spanning segment. The Periplasmic portion of the chain corresponds to 428 to 430 (NTQ). The chain crosses the membrane as a helical span at residues 431–451 (QSMLLLCISLAVLGFFLGIEV). Topologically, residues 452–458 (QKRRLGS) are cytoplasmic. Residues 459–479 (MGALASTINIIVLDNPMTFHF) traverse the membrane as a helical segment. Residues 480–481 (SQ) lie on the Periplasmic side of the membrane. The helical transmembrane segment at 482 to 502 (FLDSALGQIVGCVLAFTVILL) threads the bilayer. Topologically, residues 503 to 655 (VRDKSRDRTG…HKYQHALTDS (153 aa)) are cytoplasmic.

This sequence belongs to the aromatic acid exporter ArAE (TC 2.A.85) family.

It is found in the cell inner membrane. Its function is as follows. Forms an efflux pump with AaeA. Could function as a metabolic relief valve, allowing to eliminate certain compounds when they accumulate to high levels in the cell. The protein is p-hydroxybenzoic acid efflux pump subunit AaeB of Escherichia coli O157:H7.